We begin with the raw amino-acid sequence, 2025 residues long: E3 ubiquitin-protein ligase TRIP12 (2025 aa).

Over residues 1–10 (MSNRPNNNPG) the composition is skewed to polar residues. The disordered stretch occupies residues 1–404 (MSNRPNNNPG…SGESESDDSE (404 aa)). S2 bears the N-acetylserine mark. At S12 the chain carries Phosphoserine. A compositionally biased stretch (polar residues) spans 18–27 (RNTAGAQPQD). Residues 48 to 70 (DPDRANTSERQKTGQVPKKDNSR) are compositionally biased toward basic and acidic residues. Phosphoserine occurs at positions 77, 85, and 100. 3 stretches are compositionally biased toward polar residues: residues 78 to 88 (PDYNRTNSPSS), 99 to 108 (ESLSETNKPP), and 119 to 132 (EQQL…STSK). Composition is skewed to low complexity over residues 154–166 (SSCV…SEST) and 175–216 (PTKL…SSTV). At K181 the chain carries N6-acetyllysine. The segment covering 280-290 (PGSSKSETSKP) has biased composition (polar residues). Phosphoserine is present on residues S310 and S312. Positions 326–338 (QKTTGSCASTSRR) are enriched in polar residues. The span at 346–358 (GAAEARRQEKMAD) shows a compositional bias: basic and acidic residues. Residues 362–371 (NQETVNSSAA) show a composition bias toward polar residues. The segment covering 379-397 (GAAASSSVAGAVGMTTSGE) has biased composition (low complexity). A WWE domain is found at 755-869 (MLKKGNAQNT…DPELAKSFIK (115 aa)). Positions 970-1077 (ESLLTSPPKA…QSPKSSFLAS (108 aa)) are disordered. S975 carries the phosphoserine modification. The segment covering 983 to 1006 (GSGSLGSTTPASSGTATAATNASA) has biased composition (low complexity). Phosphoserine occurs at positions 1024 and 1030. Over residues 1034–1047 (KRKRLPKRGPRRPK) the composition is skewed to basic residues. S1049 carries the post-translational modification Phosphoserine. Positions 1050-1059 (PPRDDDKVDN) are enriched in basic and acidic residues. Residues 1062 to 1073 (KSPTTTQSPKSS) show a composition bias toward low complexity. 5 positions are modified to phosphoserine: S1063, S1350, S1355, S1362, and S1409. At T1410 the chain carries Phosphothreonine. Disordered stretches follow at residues 1440–1466 (SSKD…NAKK) and 1601–1620 (TNPE…PRLD). Position 1458 is an N6-acetyllysine (K1458). Residue S1460 is modified to Phosphoserine. Positions 1529 to 1603 (EIIPTSEFIN…AMQRLLDTNP (75 aa)) are K-box. The HECT domain maps to 1918-2025 (PDHGYTHDSR…REGQQSFHLS (108 aa)). The Glycyl thioester intermediate role is filled by C1992.

Belongs to the UPL family. K-HECT subfamily. Interacts with MYC; leading to disrupt interaction with isoform p19ARF/ARF of CDKN2A. Interacts with TRADD; leading to disrupt interaction with isoform p19ARF/ARF of CDKN2A. Interacts with SMARCC1; leading to disrupt interaction with SMARCE1.

It localises to the nucleus. Its subcellular location is the nucleoplasm. The catalysed reaction is S-ubiquitinyl-[E2 ubiquitin-conjugating enzyme]-L-cysteine + [acceptor protein]-L-lysine = [E2 ubiquitin-conjugating enzyme]-L-cysteine + N(6)-ubiquitinyl-[acceptor protein]-L-lysine.. Its pathway is protein modification; protein ubiquitination. In terms of biological role, E3 ubiquitin-protein ligase involved in ubiquitin fusion degradation (UFD) pathway and regulation of DNA repair. Part of the ubiquitin fusion degradation (UFD) pathway, a process that mediates ubiquitination of protein at their N-terminus, regardless of the presence of lysine residues in target proteins. Acts as a key regulator of DNA damage response by acting as a suppressor of RNF168, an E3 ubiquitin-protein ligase that promotes accumulation of 'Lys-63'-linked histone H2A and H2AX at DNA damage sites, thereby acting as a guard against excessive spreading of ubiquitinated chromatin at damaged chromosomes. In normal cells, mediates ubiquitination and degradation of isoform p19ARF/ARF of CDKN2A, a lysine-less tumor suppressor required for p53/TP53 activation under oncogenic stress. In cancer cells, however, isoform p19ARF/ARF and TRIP12 are located in different cell compartments, preventing isoform p19ARF/ARF ubiquitination and degradation. Does not mediate ubiquitination of isoform p16-INK4a of CDKN2A. Also catalyzes ubiquitination of NAE1 and SMARCE1, leading to their degradation. Ubiquitination and degradation of target proteins is regulated by interaction with proteins such as MYC, TRADD or SMARCC1, which disrupt the interaction between TRIP12 and target proteins. Mediates ubiquitination of ASXL1: following binding to N(6)-methyladenosine methylated DNA, ASXL1 is ubiquitinated by TRIP12, leading to its degradation and subsequent inactivation of the PR-DUB complex. This Rattus norvegicus (Rat) protein is E3 ubiquitin-protein ligase TRIP12 (Trip12).